The primary structure comprises 172 residues: Small ribosomal subunit protein uS5 (172 aa).

The region spanning 17–80 (LKEKMIQVNR…DAARRDMVKV (64 aa)) is the S5 DRBM domain.

This sequence belongs to the universal ribosomal protein uS5 family. Part of the 30S ribosomal subunit. Contacts proteins S4 and S8.

Its function is as follows. With S4 and S12 plays an important role in translational accuracy. Located at the back of the 30S subunit body where it stabilizes the conformation of the head with respect to the body. The chain is Small ribosomal subunit protein uS5 from Methylibium petroleiphilum (strain ATCC BAA-1232 / LMG 22953 / PM1).